We begin with the raw amino-acid sequence, 351 residues long: uncharacterized protein (351 aa).

Mn(2+) is bound by residues aspartate 215, aspartate 226, histidine 290, glutamate 319, and glutamate 333.

Belongs to the peptidase M24B family. The cofactor is Mn(2+).

This is an uncharacterized protein from Staphylococcus aureus (strain MSSA476).